Consider the following 751-residue polypeptide: Disintegrin and metalloproteinase domain-containing protein 2 (751 aa).

The first 16 residues, 1–16 (MLRVLFLLCGLSGLRT), serve as a signal peptide directing secretion. The propeptide occupies 17-173 (KENSERLHVQ…PYKVQSVQPR (157 aa)). Topologically, residues 17–702 (KENSERLHVQ…DVYQTAKPTR (686 aa)) are extracellular. 4 N-linked (GlcNAc...) asparagine glycosylation sites follow: Asn-122, Asn-147, Asn-219, and Asn-289. The 198-residue stretch at 177–374 (QYIEMHVVVE…QKSQCLQNLP (198 aa)) folds into the Peptidase M12B domain. Disulfide bonds link Cys-286–Cys-369, Cys-328–Cys-353, and Cys-330–Cys-335. 5 N-linked (GlcNAc...) asparagine glycosylation sites follow: Asn-352, Asn-434, Asn-458, Asn-559, and Asn-566. The 90-residue stretch at 383-472 (DAVCGNSIVE…LCPDDIVIQN (90 aa)) folds into the Disintegrin domain. Residues Cys-444 and Cys-464 are joined by a disulfide bond. In terms of domain architecture, EGF-like spans 612–645 (VNLGCTLQNCNNQGICNSLQHCHCNPTFLPPNCS). 3 disulfide bridges follow: Cys-616-Cys-627, Cys-621-Cys-633, and Cys-635-Cys-644. N-linked (GlcNAc...) asparagine glycosylation is present at Asn-643. Residues 703–723 (WPFFLLIPFFIILGALIAILV) traverse the membrane as a helical segment. Residues 724-751 (KVQFQRKKWKTEDYTSDEQFESDSELKE) are Cytoplasmic-facing. Ser-745 is subject to Phosphoserine.

As to quaternary structure, heterodimer with ADAM1/fertilin subunit alpha. Post-translationally, the signal and the metalloprotease domain are cleaved during the epididymal maturation of the spermatozoa. In terms of tissue distribution, expressed specifically in testis.

The protein resides in the membrane. Sperm surface membrane protein that may be involved in sperm-egg plasma membrane adhesion and fusion during fertilization. Could have a direct role in sperm-zona binding or migration of sperm from the uterus into the oviduct. Interactions with egg membrane could be mediated via binding between its disintegrin-like domain to one or more integrins receptors on the egg. This is a non catalytic metalloprotease-like protein. The chain is Disintegrin and metalloproteinase domain-containing protein 2 (ADAM2) from Oryctolagus cuniculus (Rabbit).